We begin with the raw amino-acid sequence, 148 residues long: UPF0260 protein Sfri_1740 (148 aa).

It belongs to the UPF0260 family.

The sequence is that of UPF0260 protein Sfri_1740 from Shewanella frigidimarina (strain NCIMB 400).